A 222-amino-acid polypeptide reads, in one-letter code: Cytochrome b6-f complex iron-sulfur subunit, chloroplastic (222 aa).

A chloroplast-targeting transit peptide spans 1-49 (MASTALSTASNPTQLCRTRASSLCKPVKGLGFGRERIPRNITCMAGSIS). The helical transmembrane segment at 66 to 86 (LLGAISLPTFGMLVPYGSFLV) threads the bilayer. The 97-residue stretch at 109–205 (VEDWLKTHGP…ADVDDGKVVF (97 aa)) folds into the Rieske domain. 4 residues coordinate [2Fe-2S] cluster: Cys151, His153, Cys169, and His172. A disulfide bridge links Cys156 with Cys171.

It belongs to the Rieske iron-sulfur protein family. As to quaternary structure, the 4 large subunits of the cytochrome b6-f complex are cytochrome b6, subunit IV (17 kDa polypeptide, petD), cytochrome f and the Rieske protein, while the 4 small subunits are petG, petL, petM and petN. The complex functions as a dimer. Requires [2Fe-2S] cluster as cofactor.

It localises to the plastid. Its subcellular location is the chloroplast thylakoid membrane. It carries out the reaction 2 oxidized [plastocyanin] + a plastoquinol + 2 H(+)(in) = 2 reduced [plastocyanin] + a plastoquinone + 4 H(+)(out). Its function is as follows. Component of the cytochrome b6-f complex, which mediates electron transfer between photosystem II (PSII) and photosystem I (PSI), cyclic electron flow around PSI, and state transitions. The sequence is that of Cytochrome b6-f complex iron-sulfur subunit, chloroplastic (petC) from Triticum aestivum (Wheat).